Here is a 305-residue protein sequence, read N- to C-terminus: Methionyl-tRNA formyltransferase (305 aa).

111–114 (SLLP) lines the (6S)-5,6,7,8-tetrahydrofolate pocket.

This sequence belongs to the Fmt family.

It catalyses the reaction L-methionyl-tRNA(fMet) + (6R)-10-formyltetrahydrofolate = N-formyl-L-methionyl-tRNA(fMet) + (6S)-5,6,7,8-tetrahydrofolate + H(+). Attaches a formyl group to the free amino group of methionyl-tRNA(fMet). The formyl group appears to play a dual role in the initiator identity of N-formylmethionyl-tRNA by promoting its recognition by IF2 and preventing the misappropriation of this tRNA by the elongation apparatus. The polypeptide is Methionyl-tRNA formyltransferase (Campylobacter jejuni subsp. jejuni serotype O:6 (strain 81116 / NCTC 11828)).